The primary structure comprises 484 residues: Zinc metalloproteinase-disintegrin stejnitin (484 aa).

The signal sequence occupies residues 1–20 (MIQVLLVTICLAVFPYQGNS). Residues 21-192 (IILESGNVND…ASQLNLTPDE (172 aa)) constitute a propeptide that is removed on maturation. Gln-193 is subject to Pyrrolidone carboxylic acid. The region spanning 194–392 (RFIELVIVAD…YTSRCLYNGP (199 aa)) is the Peptidase M12B domain. Position 197 (Glu-197) interacts with Ca(2+). N-linked (GlcNAc...) asparagine glycosylation occurs at Asn-254. Position 281 (Asp-281) interacts with Ca(2+). 3 cysteine pairs are disulfide-bonded: Cys-305/Cys-387, Cys-345/Cys-369, and Cys-347/Cys-352. Residues His-330, His-334, and His-340 each coordinate Zn(2+). 7 residues coordinate Ca(2+): Cys-387, Asn-390, Val-402, Asn-405, Glu-409, Glu-412, and Asp-415. In terms of domain architecture, Disintegrin spans 400-484 (PPVCGNYYVE…GDCPRNPFRA (85 aa)). 7 disulfide bridges follow: Cys-403-Cys-422, Cys-414-Cys-432, Cys-416-Cys-427, Cys-426-Cys-449, Cys-440-Cys-446, Cys-445-Cys-470, and Cys-458-Cys-477. The Cell attachment site motif lies at 462 to 464 (KGD).

This sequence belongs to the venom metalloproteinase (M12B) family. P-II subfamily. P-IIb sub-subfamily. Requires Zn(2+) as cofactor. Post-translationally, the N-terminus is blocked. In terms of tissue distribution, expressed by the venom gland.

The protein resides in the secreted. Its function is as follows. Snake venom zinc metalloproteinase that inhibits ADP-induced platelet aggregation in human platelet-rich plasma (IC(50) is 175 nM) and cleaves alpha-(FGA) and subsequently the beta-chain (FGG) of bovine fibrinogen, leaving the gamma-chain unaffected. It is also able to inhibit proliferatin of ECV304 cells by inducing apoptosis of these cells. The sequence is that of Zinc metalloproteinase-disintegrin stejnitin from Trimeresurus stejnegeri (Chinese green tree viper).